The chain runs to 337 residues: Membrane-spanning 4-domains subfamily A member 18 (337 aa).

Residues 101 to 121 (LGTTDLQTQPGGPQNPPTCAP) form a disordered region. A run of 4 helical transmembrane segments spans residues 155–175 (LGAI…NPSL), 183–203 (AISG…SLSV), 220–240 (MNVV…VDLI), and 252–272 (GGLL…SHFG).

Belongs to the MS4A family.

Its subcellular location is the membrane. This Bos taurus (Bovine) protein is Membrane-spanning 4-domains subfamily A member 18 (MS4A18).